The primary structure comprises 187 residues: Adenine phosphoribosyltransferase (187 aa).

Belongs to the purine/pyrimidine phosphoribosyltransferase family. Homodimer.

It is found in the cytoplasm. The catalysed reaction is AMP + diphosphate = 5-phospho-alpha-D-ribose 1-diphosphate + adenine. It functions in the pathway purine metabolism; AMP biosynthesis via salvage pathway; AMP from adenine: step 1/1. Its function is as follows. Catalyzes a salvage reaction resulting in the formation of AMP, that is energically less costly than de novo synthesis. The polypeptide is Adenine phosphoribosyltransferase (Yersinia pestis (strain Pestoides F)).